The primary structure comprises 184 residues: Ribonuclease HII (184 aa).

In terms of domain architecture, RNase H type-2 spans 2–184 (AKICGIDEAG…KPKLAQSSLF (183 aa)). Residues Asp8, Glu9, and Asp95 each contribute to the a divalent metal cation site.

This sequence belongs to the RNase HII family. Mn(2+) serves as cofactor. Mg(2+) is required as a cofactor.

The protein localises to the cytoplasm. The catalysed reaction is Endonucleolytic cleavage to 5'-phosphomonoester.. Functionally, endonuclease that specifically degrades the RNA of RNA-DNA hybrids. The polypeptide is Ribonuclease HII (Campylobacter concisus (strain 13826)).